The chain runs to 200 residues: Snake venom serine protease VaSP1 (200 aa).

The Peptidase S1 domain maps to 1–200 (VIGGDECNIN…EIQGIVSYGK (200 aa)). Active-site charge relay system residues include aspartate 88 and serine 182.

In terms of assembly, monomer. N-glycosylated. The protein exist in multiple isoforms. As to expression, expressed by the venom gland.

Its subcellular location is the secreted. With respect to regulation, inhibited by Pefabloc (90% inhibition), DTT (90%), Zn(2+) (80%), trypsin inhibitor II (50%), and benzamidine (45%), but not inhibited by EDTA, Ca(2+), Mg(2+) and L-Cys. Its function is as follows. Snake venom serine protease active on several blood coagulation enzymes. It completely cleaves fibrinogen Aalpha chain (FGA) after 120 minutes, partially cleaves Bbeta chain (FGB) (overnight) and has no activity on gamma chain. It does not release fibrinopeptides A and/or B exclusively, since the enzyme does not provoke fibrin polymerisation. It also degrades fibrin as efficiently as plasmin, and exhibits potent ability to cleave plasminogen and prothrombin, as well as heavy chain of factor X (F10). In vitro, it cleaves insulin B-chain (at positions His38-Leu39, Ala40-Leu41 and Tyr16-Leu17). This chain is Snake venom serine protease VaSP1, found in Vipera ammodytes ammodytes (Western sand viper).